Reading from the N-terminus, the 216-residue chain is MKFFLDTANVDKIKEFNDLGMVDGVTTNPTLIAKEGRDFHEVIKEICSIVDGPVSAEVIALDAEGMIEEARELVKLADNVVVKIPMTKEGLKAVNVLSKEGIQTNVTLIFSANQALMAAKAGATYVSPFVGRLDDNGQNGMDLIAEIVQIFTNYGIATEVIVASVRHPIHVIQSAEMGADVATIPFAVLDKMFNHPLTDKGIESFMKDWEEFQKNK.

Residue Lys-83 is the Schiff-base intermediate with substrate of the active site.

It belongs to the transaldolase family. Type 3B subfamily.

It is found in the cytoplasm. The catalysed reaction is D-sedoheptulose 7-phosphate + D-glyceraldehyde 3-phosphate = D-erythrose 4-phosphate + beta-D-fructose 6-phosphate. The protein operates within carbohydrate degradation; pentose phosphate pathway; D-glyceraldehyde 3-phosphate and beta-D-fructose 6-phosphate from D-ribose 5-phosphate and D-xylulose 5-phosphate (non-oxidative stage): step 2/3. In terms of biological role, transaldolase is important for the balance of metabolites in the pentose-phosphate pathway. This Methanococcus aeolicus (strain ATCC BAA-1280 / DSM 17508 / OCM 812 / Nankai-3) protein is Probable transaldolase.